Consider the following 134-residue polypeptide: Interferon-induced transmembrane protein 5 (134 aa).

A compositionally biased stretch (basic and acidic residues) spans M1–A20. The tract at residues M1–P31 is disordered. At M1–M39 the chain is on the extracellular side. A helical membrane pass occupies residues L40 to V60. S-palmitoyl cysteine attachment occurs at residues C52, C53, and C86. The Cytoplasmic portion of the chain corresponds to H61–N88. A helical transmembrane segment spans residues I89–G109. At A110–N134 the chain is on the extracellular side.

It belongs to the CD225/Dispanin family. Interacts with FKBP11. In terms of processing, palmitoylated. Detected in embryonic bone (at protein level). Highly expressed in osteoblasts of adults and embryos. Expressed in primitive hemopoietic cells.

The protein localises to the cell membrane. Its function is as follows. Required for normal bone mineralization. In Mus musculus (Mouse), this protein is Interferon-induced transmembrane protein 5 (Ifitm5).